We begin with the raw amino-acid sequence, 205 residues long: uncharacterized protein (205 aa).

4 helical membrane-spanning segments follow: residues 18–38, 69–89, 106–126, and 127–147; these read ATVNVIHPISLCLSWFLGTIG, LGIFQHLFYPIIPLLAFCFYA, VVWILAVSRHIVFLENSYYIM, and LLHPHHLHHPHPPFLIFLFLI.

Its subcellular location is the mitochondrion membrane. This is an uncharacterized protein from Arabidopsis thaliana (Mouse-ear cress).